We begin with the raw amino-acid sequence, 346 residues long: Pheromone receptor 2 (346 aa).

A run of 7 helical transmembrane segments spans residues Val-8 to His-28, Ile-34 to Ala-54, Leu-71 to Leu-94, Leu-115 to Val-135, Phe-160 to Val-180, Val-219 to Leu-239, and Leu-270 to Leu-290.

It belongs to the G-protein coupled receptor 4 family.

Its subcellular location is the membrane. In terms of biological role, receptor for the A1 pheromone, a prenylated mating factor. The protein is Pheromone receptor 2 (PRA2) of Mycosarcoma maydis (Corn smut fungus).